A 116-amino-acid chain; its full sequence is Ribosome-binding factor A (116 aa).

This sequence belongs to the RbfA family. In terms of assembly, monomer. Binds 30S ribosomal subunits, but not 50S ribosomal subunits or 70S ribosomes.

The protein localises to the cytoplasm. Its function is as follows. One of several proteins that assist in the late maturation steps of the functional core of the 30S ribosomal subunit. Associates with free 30S ribosomal subunits (but not with 30S subunits that are part of 70S ribosomes or polysomes). Required for efficient processing of 16S rRNA. May interact with the 5'-terminal helix region of 16S rRNA. This Streptococcus pneumoniae (strain ATCC BAA-255 / R6) protein is Ribosome-binding factor A.